We begin with the raw amino-acid sequence, 128 residues long: Protein Wnt-8 (128 aa).

The O-palmitoleoyl serine moiety is linked to residue S1. Cystine bridges form between C71–C109 and C87–C102. N-linked (GlcNAc...) asparagine glycosylation is found at N74 and N93.

It belongs to the Wnt family. In terms of processing, palmitoleoylation is required for efficient binding to frizzled receptors. Depalmitoleoylation leads to Wnt signaling pathway inhibition. Post-translationally, proteolytic processing by tiki1 and tiki2 promotes oxidation and formation of large disulfide-bond oligomers, leading to inactivation of wnt8.

It localises to the secreted. The protein localises to the extracellular space. The protein resides in the extracellular matrix. Functionally, ligand for members of the frizzled family of seven transmembrane receptors. Probable developmental protein. May be a signaling molecule which affects the development of discrete regions of tissues. Is likely to signal over only few cell diameters. This is Protein Wnt-8 (wnt8) from Thunnus thynnus (Atlantic bluefin tuna).